Reading from the N-terminus, the 361-residue chain is MEKKMFNSLMKIHQKYQDLKQLLETDQILNDQKQYLQIAKEIASITEIIEVFQKFLDDQKVLEDAKTILIQEDDPELIQLAKVEIATMSKNIEEYEKKLLILMLPKDKNDEKDVIVEIRGAAGGDEANIFVGDLFKMYHKWADSQKAKVKVLSSSLALAGGFSQIIFQISGQKIYSKLKFESGVHRVQRVPATETMGRIHTSTATVTVMPKIDEKIEIEINPSDLKIDTYRSSGAGGQSVNTTDSAVRITHIPTGIVVTSQDERSQIGNKEIAMGILKSKIYNLELQKQQQKQSDFRKLAGSGARSEKIRTYNYPQDRLTDHRINFSTSLKPIIQGSLNPIIEALLAQEKTELILQNYANK.

Glutamine 238 carries the post-translational modification N5-methylglutamine.

This sequence belongs to the prokaryotic/mitochondrial release factor family. Post-translationally, methylated by PrmC. Methylation increases the termination efficiency of RF1.

Its subcellular location is the cytoplasm. Peptide chain release factor 1 directs the termination of translation in response to the peptide chain termination codons UAG and UAA. This is Peptide chain release factor 1 from Mesomycoplasma hyopneumoniae (strain 7448) (Mycoplasma hyopneumoniae).